Reading from the N-terminus, the 193-residue chain is Orotate phosphoribosyltransferase (193 aa).

116–124 contributes to the 5-phospho-alpha-D-ribose 1-diphosphate binding site; it reads EDVVTTGKS. Residues threonine 120 and arginine 148 each coordinate orotate.

This sequence belongs to the purine/pyrimidine phosphoribosyltransferase family. PyrE subfamily. Homodimer. Mg(2+) serves as cofactor.

The catalysed reaction is orotidine 5'-phosphate + diphosphate = orotate + 5-phospho-alpha-D-ribose 1-diphosphate. It functions in the pathway pyrimidine metabolism; UMP biosynthesis via de novo pathway; UMP from orotate: step 1/2. Its function is as follows. Catalyzes the transfer of a ribosyl phosphate group from 5-phosphoribose 1-diphosphate to orotate, leading to the formation of orotidine monophosphate (OMP). In Clostridium tetani (strain Massachusetts / E88), this protein is Orotate phosphoribosyltransferase.